The following is a 396-amino-acid chain: Ubiquitin-like modifier-activating enzyme 5 (396 aa).

5 residues coordinate ATP: Gly76, Asp97, Lys120, Asn143, and Asn177. Cys219 and Cys222 together coordinate Zn(2+). Cys243 acts as the Glycyl thioester intermediate in catalysis. Zn(2+) is bound by residues Cys296 and Cys301.

It belongs to the ubiquitin-activating E1 family. UBA5 subfamily.

Functionally, E1-like enzyme which activates UFM1. This chain is Ubiquitin-like modifier-activating enzyme 5, found in Drosophila ananassae (Fruit fly).